A 175-amino-acid chain; its full sequence is Shikimate kinase (175 aa).

Residue 14–19 (GAGKST) coordinates ATP. Residue Ser-18 coordinates Mg(2+). 3 residues coordinate substrate: Asp-36, Arg-60, and Gly-82. Position 120 (Arg-120) interacts with ATP. Arg-140 provides a ligand contact to substrate. Gln-157 contributes to the ATP binding site.

It belongs to the shikimate kinase family. In terms of assembly, monomer. Requires Mg(2+) as cofactor.

It localises to the cytoplasm. The catalysed reaction is shikimate + ATP = 3-phosphoshikimate + ADP + H(+). Its pathway is metabolic intermediate biosynthesis; chorismate biosynthesis; chorismate from D-erythrose 4-phosphate and phosphoenolpyruvate: step 5/7. Functionally, catalyzes the specific phosphorylation of the 3-hydroxyl group of shikimic acid using ATP as a cosubstrate. This is Shikimate kinase from Histophilus somni (strain 2336) (Haemophilus somnus).